A 236-amino-acid polypeptide reads, in one-letter code: Biosynthetic peptidoglycan transglycosylase (236 aa).

The helical transmembrane segment at 20 to 40 threads the bilayer; that stretch reads LVFIVLSVLILPYALIGLYLL.

Belongs to the glycosyltransferase 51 family.

It is found in the cell inner membrane. It catalyses the reaction [GlcNAc-(1-&gt;4)-Mur2Ac(oyl-L-Ala-gamma-D-Glu-L-Lys-D-Ala-D-Ala)](n)-di-trans,octa-cis-undecaprenyl diphosphate + beta-D-GlcNAc-(1-&gt;4)-Mur2Ac(oyl-L-Ala-gamma-D-Glu-L-Lys-D-Ala-D-Ala)-di-trans,octa-cis-undecaprenyl diphosphate = [GlcNAc-(1-&gt;4)-Mur2Ac(oyl-L-Ala-gamma-D-Glu-L-Lys-D-Ala-D-Ala)](n+1)-di-trans,octa-cis-undecaprenyl diphosphate + di-trans,octa-cis-undecaprenyl diphosphate + H(+). It participates in cell wall biogenesis; peptidoglycan biosynthesis. Peptidoglycan polymerase that catalyzes glycan chain elongation from lipid-linked precursors. This Rhizobium meliloti (strain 1021) (Ensifer meliloti) protein is Biosynthetic peptidoglycan transglycosylase.